A 168-amino-acid chain; its full sequence is Large ribosomal subunit protein uL10 (168 aa).

Belongs to the universal ribosomal protein uL10 family. In terms of assembly, part of the ribosomal stalk of the 50S ribosomal subunit. The N-terminus interacts with L11 and the large rRNA to form the base of the stalk. The C-terminus forms an elongated spine to which L12 dimers bind in a sequential fashion forming a multimeric L10(L12)X complex.

Its function is as follows. Forms part of the ribosomal stalk, playing a central role in the interaction of the ribosome with GTP-bound translation factors. This Laribacter hongkongensis (strain HLHK9) protein is Large ribosomal subunit protein uL10.